A 1331-amino-acid polypeptide reads, in one-letter code: ABC multidrug transporter MDR2 (1331 aa).

The interval Met-1–Pro-50 is disordered. The segment covering Ser-31–Asn-41 has biased composition (basic and acidic residues). A run of 4 helical transmembrane segments spans residues Met-93–Phe-113, Tyr-147–Ile-167, Lys-219–Val-239, and Trp-242–Ile-262. The 291-residue stretch at Ala-97–Ser-387 folds into the ABC transmembrane type-1 1 domain. An N-linked (GlcNAc...) asparagine glycan is attached at Asn-293. The next 2 membrane-spanning stretches (helical) occupy residues Leu-325–Trp-345 and Leu-358–Val-378. An ABC transporter 1 domain is found at Ile-422 to Ala-667. ATP is bound at residue Gly-457–Ser-464. N-linked (GlcNAc...) asparagine glycosylation is present at Asn-529. 2 helical membrane-spanning segments follow: residues Leu-762–Phe-782 and Leu-808–Phe-828. In terms of domain architecture, ABC transmembrane type-1 2 spans Gly-764 to Lys-1051. A glycan (N-linked (GlcNAc...) asparagine) is linked at Asn-860. 4 consecutive transmembrane segments (helical) span residues Leu-884–Phe-904, Leu-910–Leu-930, Ala-995–Leu-1015, and Phe-1025–Phe-1045. Residues Ile-1086 to Met-1324 form the ABC transporter 2 domain. Residue Asn-1108 is glycosylated (N-linked (GlcNAc...) asparagine). Gly-1121 to Ser-1128 lines the ATP pocket.

The protein belongs to the ABC transporter superfamily. ABCB family. Multidrug resistance exporter (TC 3.A.1.201) subfamily.

It is found in the cell membrane. It carries out the reaction itraconazole(in) + ATP + H2O = itraconazole(out) + ADP + phosphate + H(+). Its function is as follows. ABC-type efflux transporter involved in the modulation susceptibility to itraconazole. The protein is ABC multidrug transporter MDR2 of Trichophyton rubrum (strain ATCC MYA-4607 / CBS 118892) (Athlete's foot fungus).